We begin with the raw amino-acid sequence, 494 residues long: Alpha-amylase B (494 aa).

An N-terminal signal peptide occupies residues 1-18 (MFLAKSIVCLALLAVANA). Glutamine 19 is modified (pyrrolidone carboxylic acid). A disulfide bridge connects residues cysteine 46 and cysteine 102. Positions 116, 165, and 174 each coordinate Ca(2+). A disulfide bridge links cysteine 153 with cysteine 167. Arginine 202 contributes to the chloride binding site. Aspartate 204 (nucleophile) is an active-site residue. Histidine 208 contributes to the Ca(2+) binding site. Glutamate 241 serves as the catalytic Proton donor. Chloride contacts are provided by asparagine 304 and arginine 343. 2 disulfides stabilise this stretch: cysteine 376-cysteine 382 and cysteine 448-cysteine 460.

Belongs to the glycosyl hydrolase 13 family. As to quaternary structure, monomer. Ca(2+) is required as a cofactor. It depends on chloride as a cofactor.

The enzyme catalyses Endohydrolysis of (1-&gt;4)-alpha-D-glucosidic linkages in polysaccharides containing three or more (1-&gt;4)-alpha-linked D-glucose units.. In Drosophila melanogaster (Fruit fly), this protein is Alpha-amylase B (Amy-d).